Here is a 41-residue protein sequence, read N- to C-terminus: Large ribosomal subunit protein bL36 (41 aa).

This sequence belongs to the bacterial ribosomal protein bL36 family.

This chain is Large ribosomal subunit protein bL36, found in Nitrobacter winogradskyi (strain ATCC 25391 / DSM 10237 / CIP 104748 / NCIMB 11846 / Nb-255).